The chain runs to 209 residues: Glycerol-3-phosphate acyltransferase (209 aa).

The next 5 helical transmembrane spans lie at 13 to 33, 63 to 83, 94 to 114, 127 to 147, and 151 to 171; these read ALIA…GLLL, LAAA…LIAQ, PGLL…WLGF, LLGI…SIAF, and YSSL…WILG.

It belongs to the PlsY family. In terms of assembly, probably interacts with PlsX.

The protein localises to the cell inner membrane. The catalysed reaction is an acyl phosphate + sn-glycerol 3-phosphate = a 1-acyl-sn-glycero-3-phosphate + phosphate. The protein operates within lipid metabolism; phospholipid metabolism. Catalyzes the transfer of an acyl group from acyl-phosphate (acyl-PO(4)) to glycerol-3-phosphate (G3P) to form lysophosphatidic acid (LPA). This enzyme utilizes acyl-phosphate as fatty acyl donor, but not acyl-CoA or acyl-ACP. The polypeptide is Glycerol-3-phosphate acyltransferase (Allorhizobium ampelinum (strain ATCC BAA-846 / DSM 112012 / S4) (Agrobacterium vitis (strain S4))).